The sequence spans 276 residues: Undecaprenyl-diphosphatase (276 aa).

Helical transmembrane passes span 84–104 (YRLGWYVIIGTIPICVLGLLF), 115–135 (LWVVATALVVFSGVIALAEYL), 188–208 (FGFLLAIPAVFASGLFSLPDA), 222–242 (QLLVATLIAFVVGLAAVSWFL), and 250–270 (MYWFVGYRVVVGVVVLILLAT).

It belongs to the UppP family.

The protein localises to the cell membrane. It carries out the reaction di-trans,octa-cis-undecaprenyl diphosphate + H2O = di-trans,octa-cis-undecaprenyl phosphate + phosphate + H(+). Functionally, catalyzes the dephosphorylation of undecaprenyl diphosphate (UPP). Confers resistance to bacitracin. In Mycobacterium ulcerans (strain Agy99), this protein is Undecaprenyl-diphosphatase.